The following is an 843-amino-acid chain: Glycogen phosphorylase, brain form (843 aa).

Ala-2 bears the N-acetylalanine mark. Phosphoserine; by PHK; in form phosphorylase A is present on Ser-15. Asp-43, Tyr-197, and Arg-310 together coordinate AMP. Tyr-197 bears the Phosphotyrosine mark. At Tyr-473 the chain carries Phosphotyrosine. Lys-569 serves as a coordination point for pyridoxal 5'-phosphate. The pyridoxal 5'-phosphate stretch occupies residues 677–678; that stretch reads TG. The residue at position 681 (Lys-681) is an N6-(pyridoxal phosphate)lysine.

It belongs to the glycogen phosphorylase family. Homodimer. Dimers associate into a tetramer to form the enzymatically active phosphorylase A. Pyridoxal 5'-phosphate is required as a cofactor. In terms of processing, phosphorylation of Ser-15 converts phosphorylase B (unphosphorylated) to phosphorylase A.

It catalyses the reaction [(1-&gt;4)-alpha-D-glucosyl](n) + phosphate = [(1-&gt;4)-alpha-D-glucosyl](n-1) + alpha-D-glucose 1-phosphate. With respect to regulation, activity of phosphorylase is controlled both by allosteric means (through the non-covalent binding of metabolites) and by covalent modification. Thus AMP allosterically activates, whereas ATP, ADP, and glucose-6-phosphate allosterically inhibit, phosphorylase B. In terms of biological role, glycogen phosphorylase that regulates glycogen mobilization. Phosphorylase is an important allosteric enzyme in carbohydrate metabolism. Enzymes from different sources differ in their regulatory mechanisms and in their natural substrates. However, all known phosphorylases share catalytic and structural properties. This chain is Glycogen phosphorylase, brain form (PYGB), found in Ovis aries (Sheep).